The following is a 598-amino-acid chain: DNA mismatch repair protein MutL (598 aa).

The protein belongs to the DNA mismatch repair MutL/HexB family.

This protein is involved in the repair of mismatches in DNA. It is required for dam-dependent methyl-directed DNA mismatch repair. May act as a 'molecular matchmaker', a protein that promotes the formation of a stable complex between two or more DNA-binding proteins in an ATP-dependent manner without itself being part of a final effector complex. The polypeptide is DNA mismatch repair protein MutL (Geotalea daltonii (strain DSM 22248 / JCM 15807 / FRC-32) (Geobacter daltonii)).